The sequence spans 67 residues: Large ribosomal subunit protein bL35 (67 aa).

Residues 21-50 are disordered; that stretch reads KVMCGPGNKRHGLINRPQKMKRTNRGPQTM. Residues 28–44 are compositionally biased toward basic residues; the sequence is NKRHGLINRPQKMKRTN.

Belongs to the bacterial ribosomal protein bL35 family.

This is Large ribosomal subunit protein bL35 from Gluconobacter oxydans (strain 621H) (Gluconobacter suboxydans).